Reading from the N-terminus, the 53-residue chain is Photosystem II reaction center protein K (53 aa).

A propeptide spanning residues 1-16 (MLKFYLENVFHLIFFA) is cleaved from the precursor. A helical transmembrane segment spans residues 28-48 (IVNVMPIIPLFFFLLAFVWQA).

This sequence belongs to the PsbK family. As to quaternary structure, PSII is composed of 1 copy each of membrane proteins PsbA, PsbB, PsbC, PsbD, PsbE, PsbF, PsbH, PsbI, PsbJ, PsbK, PsbL, PsbM, PsbT, PsbX, PsbY, PsbZ, Psb30/Ycf12, at least 3 peripheral proteins of the oxygen-evolving complex and a large number of cofactors. It forms dimeric complexes.

It localises to the plastid. It is found in the chloroplast thylakoid membrane. One of the components of the core complex of photosystem II (PSII). PSII is a light-driven water:plastoquinone oxidoreductase that uses light energy to abstract electrons from H(2)O, generating O(2) and a proton gradient subsequently used for ATP formation. It consists of a core antenna complex that captures photons, and an electron transfer chain that converts photonic excitation into a charge separation. This is Photosystem II reaction center protein K from Huperzia lucidula (Shining clubmoss).